Consider the following 223-residue polypeptide: Mating-type protein ALPHA2 (223 aa).

Positions 151–213 (EFKKGKRFLK…NRRRKDKITE (63 aa)) form a DNA-binding region, homeobox; TALE-type.

The protein belongs to the TALE/M-ATYP homeobox family. In terms of assembly, forms a heterodimer with A1.

It localises to the nucleus. Its function is as follows. Mating type proteins are sequence specific DNA-binding proteins that act as master switches in yeast differentiation by controlling gene expression in a cell type-specific fashion. Transcriptional corepressor that acts in conjunction with A1 to repress transcription of haploid-specific genes. In Kluyveromyces lactis (strain ATCC 8585 / CBS 2359 / DSM 70799 / NBRC 1267 / NRRL Y-1140 / WM37) (Yeast), this protein is Mating-type protein ALPHA2 (HMLALPHA2).